Consider the following 531-residue polypeptide: Conglutin beta 1 (531 aa).

An N-terminal signal peptide occupies residues 1–30 (MGKMRVRFPTLVLVLGIVFLMAVSIGIAYG). Positions 31-108 (EKDVLKSHER…EQQQGSPSYS (78 aa)) are excised as a propeptide. 2 stretches are compositionally biased toward basic and acidic residues: residues 37-51 (SHER…EWQP) and 79-99 (SGYE…REQE). Disordered stretches follow at residues 37–124 (SHER…RFQT), 283–302 (QEYE…EGVI), and 314–337 (TKYA…LRSN). Residues 115 to 273 (YHFNSQRFQT…TFNTRYEEIQ (159 aa)) enclose the Cupin type-1 1 domain. Basic and acidic residues predominate over residues 286–302 (EEQRRGQEQSHQDEGVI). A compositionally biased stretch (polar residues) spans 316 to 337 (YAQSSSGKDKPSQSGPFNLRSN). The Cupin type-1 2 domain occupies 332–494 (FNLRSNEPIY…TFPGSAEDIE (163 aa)). Asn-444 carries an N-linked (GlcNAc...) asparagine glycan. The interval 508–531 (ALPQQQQQSEKEGRRGRRGPISSI) is disordered.

It belongs to the 7S seed storage protein family.

Its function is as follows. Seed storage protein. Accumulates during seed development and is hydrolyzed after germination to provide a carbon and nitrogen source for the developing seedling. Has a lectin-like activity. The polypeptide is Conglutin beta 1 (Lupinus albus (White lupine)).